Reading from the N-terminus, the 426-residue chain is Molybdopterin molybdenumtransferase 1 (426 aa).

It belongs to the MoeA family. The cofactor is Mg(2+).

It carries out the reaction adenylyl-molybdopterin + molybdate = Mo-molybdopterin + AMP + H(+). The protein operates within cofactor biosynthesis; molybdopterin biosynthesis. Catalyzes the insertion of molybdate into adenylated molybdopterin with the concomitant release of AMP. The chain is Molybdopterin molybdenumtransferase 1 (moeA1) from Mycobacterium tuberculosis (strain ATCC 25618 / H37Rv).